Here is a 269-residue protein sequence, read N- to C-terminus: Protein OPG079 (269 aa).

The protein belongs to the orthopoxvirus OPG079 family. In terms of assembly, homoomultimer (Potential). Interacts with the small subunit of ribonucleotide reductase. Interacts with host FAM111A; this interaction protomtes OPG079 degradation through autophagy.

Its subcellular location is the host cytoplasm. Its function is as follows. Plays an essential role in viral DNA replication. Binds to ssDNA with high affinity and localizes to cytoplasmic factories where nascent viral genomes accumulate. May disrupt loops, hairpins and other secondary structures present on ssDNA to reduce and eliminate pausing of viral DNA polymerase at specific sites during elongation. This Bos taurus (Bovine) protein is Protein OPG079 (OPG079).